Consider the following 790-residue polypeptide: Cadherin-6 (790 aa).

Positions 1–30 are cleaved as a signal peptide; sequence MRTYHCFWLLFWAGQPHQSFLTLLSKRTSG. A propeptide spanning residues 31 to 53 is cleaved from the precursor; that stretch reads FPEKEKVLVLSGNSRRDLSRSKR. 5 Cadherin domains span residues 54-159, 160-268, 269-383, 384-486, and 487-608; these read SWMW…EPMF, TKDV…PPRF, PQST…PPVF, SRPA…DNAP, and EFAM…LIHP. Over 54–615 the chain is Extracellular; the sequence is SWMWNQFFLL…IHPTGLSTGA (562 aa). N-linked (GlcNAc...) asparagine glycosylation is found at asparagine 165 and asparagine 255. The disordered stretch occupies residues 261-289; that stretch reads VNDNPPRFPQSTYQFRAPESTPPDSPIGR. 3 N-linked (GlcNAc...) asparagine glycosylation sites follow: asparagine 437, asparagine 455, and asparagine 536. A helical membrane pass occupies residues 616-636; the sequence is LIAILLCIIILLVTVVLFAAL. At 637–790 the chain is on the cytoplasmic side; it reads RRQRKKEPLI…YGSMDSDKDS (154 aa).

The protein resides in the cell membrane. Its function is as follows. Cadherins are calcium-dependent cell adhesion proteins. They preferentially interact with themselves in a homophilic manner in connecting cells; cadherins may thus contribute to the sorting of heterogeneous cell types. The polypeptide is Cadherin-6 (CDH6) (Gallus gallus (Chicken)).